The following is a 126-amino-acid chain: Fluoride-specific ion channel FluC (126 aa).

4 helical membrane-spanning segments follow: residues 3 to 23 (MILAVAAGGGLGAVARYLTGV), 39 to 59 (TVNVTGSFAMGVLAGLGAHVW), 71 to 91 (VGVLGGFTTFSSFSLDVALLV), and 101 to 121 (AYVAASFLLSVGGLFAGLALI). Na(+) contacts are provided by Gly-75 and Thr-78.

This sequence belongs to the fluoride channel Fluc/FEX (TC 1.A.43) family.

Its subcellular location is the cell inner membrane. The catalysed reaction is fluoride(in) = fluoride(out). Its activity is regulated as follows. Na(+) is not transported, but it plays an essential structural role and its presence is essential for fluoride channel function. Its function is as follows. Fluoride-specific ion channel. Important for reducing fluoride concentration in the cell, thus reducing its toxicity. This Rhodospirillum centenum (strain ATCC 51521 / SW) protein is Fluoride-specific ion channel FluC.